The primary structure comprises 545 residues: Protein FAR1-RELATED SEQUENCE 9 (545 aa).

The 44-residue stretch at 22 to 65 (LNYLKRRQLENPGFLYAIEDDCGNVFWADPTCRLNYTYFGDTLV) folds into the FAR1 domain. Residues 66-150 (FDTTYRRGKR…RVFSQTRLRF (85 aa)) form the MULE domain. The SWIM-type zinc-finger motif lies at 345–381 (HTVSFDSLEVKANCSCQMFEYSGIICRHILAVFSAKN). Positions 460 to 495 (SNRTPGTRLPNGEAYPSEEARETANATNHPGGEKER) are disordered. A coiled-coil region spans residues 492–545 (EKERTILELTAELERTGQRCEVYRANLLSILRDMEEQKFQLSLKVQNARLSLKE).

The protein belongs to the FHY3/FAR1 family. Expressed in hypocotyls, rosette and cauline leaves, inflorescences stems, flowers and siliques.

It localises to the nucleus. Functionally, putative transcription activator involved in regulating light control of development. May act as a negative regulator specific to phyB signaling. The protein is Protein FAR1-RELATED SEQUENCE 9 (FRS9) of Arabidopsis thaliana (Mouse-ear cress).